We begin with the raw amino-acid sequence, 288 residues long: 4-hydroxy-tetrahydrodipicolinate synthase (288 aa).

Thr-43 contacts pyruvate. Catalysis depends on Tyr-131, which acts as the Proton donor/acceptor. Lys-160 serves as the catalytic Schiff-base intermediate with substrate. Ile-200 contributes to the pyruvate binding site.

The protein belongs to the DapA family. In terms of assembly, homotetramer; dimer of dimers.

The protein resides in the cytoplasm. The catalysed reaction is L-aspartate 4-semialdehyde + pyruvate = (2S,4S)-4-hydroxy-2,3,4,5-tetrahydrodipicolinate + H2O + H(+). The protein operates within amino-acid biosynthesis; L-lysine biosynthesis via DAP pathway; (S)-tetrahydrodipicolinate from L-aspartate: step 3/4. Functionally, catalyzes the condensation of (S)-aspartate-beta-semialdehyde [(S)-ASA] and pyruvate to 4-hydroxy-tetrahydrodipicolinate (HTPA). This chain is 4-hydroxy-tetrahydrodipicolinate synthase, found in Methanococcus aeolicus (strain ATCC BAA-1280 / DSM 17508 / OCM 812 / Nankai-3).